The sequence spans 163 residues: Phosphopantetheine adenylyltransferase (163 aa).

A substrate-binding site is contributed by Thr-11. Residues 11 to 12 (TF) and His-19 each bind ATP. Substrate-binding residues include Lys-43, Leu-75, and Arg-89. Residues 90-92 (GLR), Glu-100, and 125-131 (YMFISAT) contribute to the ATP site.

The protein belongs to the bacterial CoaD family. In terms of assembly, homohexamer. It depends on Mg(2+) as a cofactor.

The protein resides in the cytoplasm. The catalysed reaction is (R)-4'-phosphopantetheine + ATP + H(+) = 3'-dephospho-CoA + diphosphate. The protein operates within cofactor biosynthesis; coenzyme A biosynthesis; CoA from (R)-pantothenate: step 4/5. In terms of biological role, reversibly transfers an adenylyl group from ATP to 4'-phosphopantetheine, yielding dephospho-CoA (dPCoA) and pyrophosphate. The sequence is that of Phosphopantetheine adenylyltransferase from Azoarcus sp. (strain BH72).